Reading from the N-terminus, the 727-residue chain is Synaptic vesicle glycoprotein 2C (727 aa).

An interaction with SYT1 region spans residues 1–57 (MEDSYKDRTSLMKGAKDIAKEVKKQTVKKVNQAVDRAQDEYTQRSYSRFQDEDDDDD). Residues 1-154 (MEDSYKDRTS…CGHGRFQWAL (154 aa)) lie on the Cytoplasmic side of the membrane. The segment at 22 to 120 (VKKQTVKKVN…QPKGDEYKDR (99 aa)) is disordered. 2 positions are modified to phosphoserine: S75 and S76. At T79 the chain carries Phosphothreonine. Residues 155-175 (FFVLGMALMADGVEVFVVGFV) form a helical membrane-spanning segment. Residues 176–191 (LPSAETDLCIPNSGSG) lie on the Extracellular side of the membrane. Residues 192-212 (WLGSIVYLGMMVGAFFWGGLA) form a helical membrane-spanning segment. The Cytoplasmic portion of the chain corresponds to 213–226 (DKVGRKQSLLICMS). The chain crosses the membrane as a helical span at residues 227 to 247 (VNGFFAFLSSFVQGYGFFLLC). R248 is a topological domain (extracellular). The helical transmembrane segment at 249–269 (LLSGFGIGGAIPTVFSYFAEV) threads the bilayer. The Cytoplasmic portion of the chain corresponds to 270–280 (LAREKRGEHLS). A helical membrane pass occupies residues 281 to 301 (WLCMFWMIGGIYASAMAWAII). Over 302–320 (PHYGWSFSMGSAYQFHSWR) the chain is Extracellular. The chain crosses the membrane as a helical span at residues 321 to 341 (VFVIVCALPCVSSVVALTFMP). Topologically, residues 342–437 (ESPRFLLEVG…PVRENTIKLT (96 aa)) are cytoplasmic. A helical transmembrane segment spans residues 438 to 458 (IVWFTLSFGYYGLSVWFPDVI). Residues 459-578 (KHLQSDEYAL…CQITFDDDYS (120 aa)) lie on the Extracellular side of the membrane. Y466 is subject to Phosphotyrosine. N480, N484, N534, N559, and N565 each carry an N-linked (GlcNAc...) asparagine glycan. Residues 529–566 (NTYFKNCTFIDTLFENTDFEPYKFIDSEFQNCSFLHNK) form a (Microbial infection) C.botulinum neurotoxin type A-binding region. The helical transmembrane segment at 579–599 (AYWIYFVNFLGTLAVLPGNIV) threads the bilayer. Topologically, residues 600 to 609 (SALLMDRIGR) are cytoplasmic. Residues 610-630 (LTMLGGSMVLSGISCFFLWFG) form a helical membrane-spanning segment. Residues 631–636 (TSESMM) lie on the Extracellular side of the membrane. A helical transmembrane segment spans residues 637 to 657 (IGMLCLYNGLTISAWNSLDVV). The Cytoplasmic portion of the chain corresponds to 658 to 670 (TVELYPTDRRATG). Residues 671-693 (FGFLNALCKAAAVLGNLIFGSLV) form a helical membrane-spanning segment. At 694–697 (SITK) the chain is on the extracellular side. The helical transmembrane segment at 698–716 (AIPILLASTVLVCGGLVGL) threads the bilayer. The Cytoplasmic segment spans residues 717–727 (RLPDTRTQVLM).

It belongs to the major facilitator superfamily. As to quaternary structure, interacts with SYT1 in a calcium-dependent manner. In terms of assembly, (Microbial infection) Interacts with C.botulinum neurotoxin type A (BoNT/A, botA). (Microbial infection) Interacts with C.botulinum neurotoxin type F (BoNT/F). Interaction requires glycosylation of SV2 proteins. Post-translationally, N-glycosylated. Expressed at high levels in very few brain areas including the striatum, midbrain and hindbrain, and in the olfactory bulb. Expressed at lower levels in cerebrum, hippocampus and cerebellum (at protein level). Mainly expressed in brain; also detected in lung, liver, kidney.

It is found in the cytoplasmic vesicle. The protein resides in the secretory vesicle. Its subcellular location is the synaptic vesicle membrane. Its function is as follows. Plays a role in the control of regulated secretion in neural and endocrine cells, enhancing selectively low-frequency neurotransmission. Positively regulates vesicle fusion by maintaining the readily releasable pool of secretory vesicles. (Microbial infection) Receptor for C.botulinum neurotoxin type A (BoNT/A, botA); the toxin binds Sv2c via extracellular loop 4. Restores uptake of BoNT/A in rat cells that are deleted for SV2 receptor. In terms of biological role, (Microbial infection) Possible receptor for C.botulinum neurotoxin type D (BoNT/D, botD); BoNT/D does not bind to extracellular loop 4 as do BoNT/A and BoNT/E. Another group does not find a convincing interaction with SV2. Functionally, (Microbial infection) Receptor for C.botulinum neurotoxin type F (BoNT/F); binding requires glycosylation of Asn-573. This Rattus norvegicus (Rat) protein is Synaptic vesicle glycoprotein 2C (Sv2c).